The sequence spans 621 residues: tRNA uridine 5-carboxymethylaminomethyl modification enzyme MnmG (621 aa).

17–22 (GGGHAG) lines the FAD pocket. An NAD(+)-binding site is contributed by 276-290 (GPRYCPSIEDKIMKF).

The protein belongs to the MnmG family. Homodimer. Heterotetramer of two MnmE and two MnmG subunits. FAD serves as cofactor.

It is found in the cytoplasm. NAD-binding protein involved in the addition of a carboxymethylaminomethyl (cmnm) group at the wobble position (U34) of certain tRNAs, forming tRNA-cmnm(5)s(2)U34. The sequence is that of tRNA uridine 5-carboxymethylaminomethyl modification enzyme MnmG from Zymomonas mobilis subsp. mobilis (strain ATCC 31821 / ZM4 / CP4).